Here is a 187-residue protein sequence, read N- to C-terminus: Orotate phosphoribosyltransferase (187 aa).

5-phospho-alpha-D-ribose 1-diphosphate contacts are provided by residues Arg98, Lys99, Lys102, His104, and 128–136; that span reads EDVTTTGGS. The orotate site is built by Thr132 and Arg160.

This sequence belongs to the purine/pyrimidine phosphoribosyltransferase family. PyrE subfamily. As to quaternary structure, homodimer. Mg(2+) serves as cofactor.

It catalyses the reaction orotidine 5'-phosphate + diphosphate = orotate + 5-phospho-alpha-D-ribose 1-diphosphate. It functions in the pathway pyrimidine metabolism; UMP biosynthesis via de novo pathway; UMP from orotate: step 1/2. Catalyzes the transfer of a ribosyl phosphate group from 5-phosphoribose 1-diphosphate to orotate, leading to the formation of orotidine monophosphate (OMP). The chain is Orotate phosphoribosyltransferase from Rhodopseudomonas palustris (strain ATCC BAA-98 / CGA009).